The chain runs to 190 residues: Mitochondrial inner membrane protease subunit 1 (190 aa).

Residues Ser-40 and Lys-84 contribute to the active site.

It belongs to the peptidase S26 family. IMP1 subfamily. Component of the mitochondrial inner membrane peptidase (IMP) complex which at least consists of IMP1, IMP2 and SOM1.

It is found in the mitochondrion inner membrane. Its function is as follows. Catalytic component of the mitochondrial inner membrane peptidase (IMP) complex. IMP catalyzes the removal of signal peptides required for the targeting of proteins from the mitochondrial matrix, across the inner membrane, into the inter-membrane space. The two catalytic IMP subunits seem to have non-overlapping substrate specificities. IMP1 substrates include nuclear encoded CYB2, mitochondrially encoded COX2, NADH-cytochrome b5 reductase and GUT2. This chain is Mitochondrial inner membrane protease subunit 1 (IMP1), found in Saccharomyces cerevisiae (strain ATCC 204508 / S288c) (Baker's yeast).